A 204-amino-acid chain; its full sequence is Peptide deformylase (204 aa).

The Fe cation site is built by C131 and H174. E175 is a catalytic residue. A Fe cation-binding site is contributed by H178.

The protein belongs to the polypeptide deformylase family. Fe(2+) is required as a cofactor.

The enzyme catalyses N-terminal N-formyl-L-methionyl-[peptide] + H2O = N-terminal L-methionyl-[peptide] + formate. Its function is as follows. Removes the formyl group from the N-terminal Met of newly synthesized proteins. Requires at least a dipeptide for an efficient rate of reaction. N-terminal L-methionine is a prerequisite for activity but the enzyme has broad specificity at other positions. The sequence is that of Peptide deformylase from Streptococcus pyogenes serotype M18 (strain MGAS8232).